The sequence spans 709 residues: Polyribonucleotide nucleotidyltransferase (709 aa).

The Mg(2+) site is built by Asp-485 and Asp-491. In terms of domain architecture, KH spans 552-611; the sequence is PRIHTMKIDPKKIKDVIGKGGATIRALTEETGTSIDIDDDGTVKIAATDNNAAKRVMERI. The S1 motif domain maps to 621 to 689; sequence NAIYKGKVTR…RQGRIRLTMK (69 aa).

It belongs to the polyribonucleotide nucleotidyltransferase family. As to quaternary structure, component of the RNA degradosome, which is a multiprotein complex involved in RNA processing and mRNA degradation. Requires Mg(2+) as cofactor.

The protein resides in the cytoplasm. The enzyme catalyses RNA(n+1) + phosphate = RNA(n) + a ribonucleoside 5'-diphosphate. Its function is as follows. Involved in mRNA degradation. Catalyzes the phosphorolysis of single-stranded polyribonucleotides processively in the 3'- to 5'-direction. The protein is Polyribonucleotide nucleotidyltransferase of Glaesserella parasuis serovar 5 (strain SH0165) (Haemophilus parasuis).